The sequence spans 314 residues: Malate dehydrogenase (314 aa).

NAD(+) is bound by residues 13–18 (GGGQIG) and aspartate 37. 2 residues coordinate substrate: arginine 88 and arginine 94. NAD(+) is bound by residues asparagine 101 and 124 to 126 (VAN). The substrate site is built by asparagine 126 and arginine 157. Histidine 181 (proton acceptor) is an active-site residue.

The protein belongs to the LDH/MDH superfamily. MDH type 3 family.

The catalysed reaction is (S)-malate + NAD(+) = oxaloacetate + NADH + H(+). Functionally, catalyzes the reversible oxidation of malate to oxaloacetate. This Myxococcus xanthus protein is Malate dehydrogenase.